An 81-amino-acid chain; its full sequence is EC protein I/II (81 aa).

This sequence belongs to the metallothionein superfamily. Type 15 family.

In terms of biological role, binds 5 molecules of zinc. May have a role in Zn(2+) homeostasis during embryogenesis. The protein is EC protein I/II of Triticum aestivum (Wheat).